Here is a 255-residue protein sequence, read N- to C-terminus: HLA class II histocompatibility antigen, DQ alpha 2 chain (255 aa).

A signal peptide spans 1–23; the sequence is MILNKALLLGALALTAVMSPCGG. Residues 24–110 are alpha-1; that stretch reads EDIVADHVAS…RQSNSTAATN (87 aa). The Extracellular portion of the chain corresponds to 24–217; sequence EDIVADHVAS…IPAPMSELTE (194 aa). N-linked (GlcNAc...) asparagine glycosylation is found at Asn-104 and Asn-144. Residues 111–204 form an alpha-2 region; that stretch reads EVPEVTVFSK…GLDEPLLKHW (94 aa). Positions 113–205 constitute an Ig-like C1-type domain; the sequence is PEVTVFSKFP…LDEPLLKHWE (93 aa). Cys-133 and Cys-189 are disulfide-bonded. The tract at residues 205–217 is connecting peptide; that stretch reads EPEIPAPMSELTE. The chain crosses the membrane as a helical span at residues 218 to 240; that stretch reads TLVCALGLSVGLMGIVVGTVFII. At 241–255 the chain is on the cytoplasmic side; that stretch reads QGLRSVGASRHQGLL.

The protein belongs to the MHC class II family. Heterodimer of an alpha and a beta subunit; also referred as MHC class II molecule. Dimer formation with HLA-DQB2, but not with HLA-DQB1, is required for efficient exit from the endoplasmic reticulum (ER). In the ER, forms a heterononamer; 3 MHC class II molecules bind to a CD74 homotrimer (also known as invariant chain or HLA class II histocompatibility antigen gamma chain). In the endosomal/lysosomal system; CD74 undergoes sequential degradation by various proteases; leaving a small fragment termed CLIP on each MHC class II molecule. MHC class II molecule interacts with HLA_DM, and HLA_DO in B-cells, in order to release CLIP and facilitate the binding of antigenic peptides. Association with HLA-DMA also occurs in skin Langerhans cells, in post-Golgi compartments. In terms of tissue distribution, restricted to skin Langerhans cells, although some expression at low levels may occur at the surface of B lymphoblastoid cells.

Its subcellular location is the cell membrane. The protein resides in the endoplasmic reticulum membrane. It localises to the golgi apparatus. It is found in the trans-Golgi network membrane. The protein localises to the endosome membrane. Its subcellular location is the lysosome membrane. In terms of biological role, binds peptides derived from antigens that access the endocytic route of antigen presenting cells (APC) and presents them on the cell surface for recognition by the CD4 T-cells. The peptide binding cleft accommodates peptides of 10-30 residues. The peptides presented by MHC class II molecules are generated mostly by degradation of proteins that access the endocytic route, where they are processed by lysosomal proteases and other hydrolases. Exogenous antigens that have been endocytosed by the APC are thus readily available for presentation via MHC II molecules, and for this reason this antigen presentation pathway is usually referred to as exogenous. As membrane proteins on their way to degradation in lysosomes as part of their normal turn-over are also contained in the endosomal/lysosomal compartments, exogenous antigens must compete with those derived from endogenous components. Autophagy is also a source of endogenous peptides, autophagosomes constitutively fuse with MHC class II loading compartments. In addition to APCs, other cells of the gastrointestinal tract, such as epithelial cells, express MHC class II molecules and CD74 and act as APCs, which is an unusual trait of the GI tract. To produce a MHC class II molecule that presents an antigen, three MHC class II molecules (heterodimers of an alpha and a beta chain) associate with a CD74 trimer in the ER to form a heterononamer. Soon after the entry of this complex into the endosomal/lysosomal system where antigen processing occurs, CD74 undergoes a sequential degradation by various proteases, including CTSS and CTSL, leaving a small fragment termed CLIP (class-II-associated invariant chain peptide). The removal of CLIP is facilitated by HLA-DM via direct binding to the alpha-beta-CLIP complex so that CLIP is released. HLA-DM stabilizes MHC class II molecules until primary high affinity antigenic peptides are bound. The MHC II molecule bound to a peptide is then transported to the cell membrane surface. In B-cells, the interaction between HLA-DM and MHC class II molecules is regulated by HLA-DO. Primary dendritic cells (DCs) also to express HLA-DO. Lysosomal microenvironment has been implicated in the regulation of antigen loading into MHC II molecules, increased acidification produces increased proteolysis and efficient peptide loading. The protein is HLA class II histocompatibility antigen, DQ alpha 2 chain (HLA-DQA2) of Homo sapiens (Human).